Reading from the N-terminus, the 677-residue chain is Methionine--tRNA ligase (677 aa).

Positions 15-25 (PYANGSIHLGH) match the 'HIGH' region motif. Cys146, Cys149, Cys159, and Cys162 together coordinate Zn(2+). Positions 333–337 (KMSKS) match the 'KMSKS' region motif. Residue Lys336 participates in ATP binding. The tRNA-binding domain maps to 575–677 (DFAKVDLRVA…AGAKPGHQVK (103 aa)).

The protein belongs to the class-I aminoacyl-tRNA synthetase family. MetG type 1 subfamily. As to quaternary structure, homodimer. It depends on Zn(2+) as a cofactor.

Its subcellular location is the cytoplasm. It carries out the reaction tRNA(Met) + L-methionine + ATP = L-methionyl-tRNA(Met) + AMP + diphosphate. Functionally, is required not only for elongation of protein synthesis but also for the initiation of all mRNA translation through initiator tRNA(fMet) aminoacylation. This Escherichia coli O17:K52:H18 (strain UMN026 / ExPEC) protein is Methionine--tRNA ligase.